The following is a 172-amino-acid chain: Shikimate kinase (172 aa).

14–19 (GAGKST) is a binding site for ATP. S18 provides a ligand contact to Mg(2+). The substrate site is built by D36, R60, and G82. R120 is a binding site for ATP. R140 is a substrate binding site. Residue Q157 coordinates ATP.

It belongs to the shikimate kinase family. As to quaternary structure, monomer. Requires Mg(2+) as cofactor.

The protein localises to the cytoplasm. The catalysed reaction is shikimate + ATP = 3-phosphoshikimate + ADP + H(+). It functions in the pathway metabolic intermediate biosynthesis; chorismate biosynthesis; chorismate from D-erythrose 4-phosphate and phosphoenolpyruvate: step 5/7. Its function is as follows. Catalyzes the specific phosphorylation of the 3-hydroxyl group of shikimic acid using ATP as a cosubstrate. The polypeptide is Shikimate kinase (Colwellia psychrerythraea (strain 34H / ATCC BAA-681) (Vibrio psychroerythus)).